The sequence spans 1377 residues: DNA-directed RNA polymerase subunit beta' (1377 aa).

4 residues coordinate Zn(2+): Cys-60, Cys-62, Cys-75, and Cys-78. Mg(2+)-binding residues include Asp-449, Asp-451, and Asp-453. Residues Cys-777, Cys-851, Cys-858, and Cys-861 each contribute to the Zn(2+) site.

Belongs to the RNA polymerase beta' chain family. The RNAP catalytic core consists of 2 alpha, 1 beta, 1 beta' and 1 omega subunit. When a sigma factor is associated with the core the holoenzyme is formed, which can initiate transcription. It depends on Mg(2+) as a cofactor. Zn(2+) serves as cofactor.

The catalysed reaction is RNA(n) + a ribonucleoside 5'-triphosphate = RNA(n+1) + diphosphate. Functionally, DNA-dependent RNA polymerase catalyzes the transcription of DNA into RNA using the four ribonucleoside triphosphates as substrates. This chain is DNA-directed RNA polymerase subunit beta', found in Borrelia turicatae (strain 91E135).